The chain runs to 81 residues: Photosystem I iron-sulfur center (81 aa).

4Fe-4S ferredoxin-type domains lie at 2-31 (AHSV…MVPW) and 39-68 (IASA…VRVY). [4Fe-4S] cluster-binding residues include cysteine 11, cysteine 14, cysteine 17, cysteine 21, cysteine 48, cysteine 51, cysteine 54, and cysteine 58.

As to quaternary structure, the eukaryotic PSI reaction center is composed of at least 11 subunits. It depends on [4Fe-4S] cluster as a cofactor.

The protein resides in the plastid. It is found in the chloroplast thylakoid membrane. The catalysed reaction is reduced [plastocyanin] + hnu + oxidized [2Fe-2S]-[ferredoxin] = oxidized [plastocyanin] + reduced [2Fe-2S]-[ferredoxin]. In terms of biological role, apoprotein for the two 4Fe-4S centers FA and FB of photosystem I (PSI); essential for photochemical activity. FB is the terminal electron acceptor of PSI, donating electrons to ferredoxin. The C-terminus interacts with PsaA/B/D and helps assemble the protein into the PSI complex. Required for binding of PsaD and PsaE to PSI. PSI is a plastocyanin-ferredoxin oxidoreductase, converting photonic excitation into a charge separation, which transfers an electron from the donor P700 chlorophyll pair to the spectroscopically characterized acceptors A0, A1, FX, FA and FB in turn. This chain is Photosystem I iron-sulfur center, found in Chlorokybus atmophyticus (Soil alga).